Consider the following 231-residue polypeptide: Large ribosomal subunit protein uL1 (231 aa).

This sequence belongs to the universal ribosomal protein uL1 family. As to quaternary structure, part of the 50S ribosomal subunit.

Functionally, binds directly to 23S rRNA. The L1 stalk is quite mobile in the ribosome, and is involved in E site tRNA release. Protein L1 is also a translational repressor protein, it controls the translation of the L11 operon by binding to its mRNA. This is Large ribosomal subunit protein uL1 from Macrococcus caseolyticus (strain JCSC5402) (Macrococcoides caseolyticum).